Consider the following 847-residue polypeptide: A-kinase anchor protein 4 (847 aa).

Positions 1-187 (MIAYCGTTKM…MAASKNTNNN (187 aa)) are excised as a propeptide. Phosphoserine occurs at positions 95, 129, 189, and 203. A compositionally biased stretch (polar residues) spans 182-204 (KNTNNNQSPSNPATKSPSNQRSV). Residues 182–209 (KNTNNNQSPSNPATKSPSNQRSVATPDG) are disordered. At Thr-206 the chain carries Phosphothreonine. Phosphoserine occurs at positions 212, 225, and 270. Residues 218-231 (YYVNRLSSLVIQMA) form an interaction with Prkar1a and Prkar2a region. Residue Tyr-300 is modified to Phosphotyrosine. Residues Ser-301, Ser-304, Ser-340, Ser-430, Ser-441, Ser-443, Ser-462, Ser-491, Ser-496, and Ser-503 each carry the phosphoserine modification. Residues 334 to 343 (YANQVASDMM) form a PKA-RI subunit binding domain region. Position 505 is a phosphothreonine (Thr-505). The tract at residues 511–536 (KQGTQGRVPNKVCPSKDEKREKISPS) is disordered. Over residues 524 to 533 (PSKDEKREKI) the composition is skewed to basic and acidic residues. 2 positions are modified to phosphoserine: Ser-536 and Ser-581. A disordered region spans residues 583-613 (QYEKSGGGQSSKSLSMKHFESRGAPGPSTCA). 8 positions are modified to phosphoserine: Ser-626, Ser-631, Ser-648, Ser-650, Ser-674, Ser-677, Ser-700, and Ser-729. Residues 655–677 (CCDSRSKQAAPVAKRPEDQSQDS) form a disordered region.

This sequence belongs to the AKAP110 family. Interacts with PRKAR1A and PRKAR2A. Interacts with ENO4. Interacts with QRICH2. Post-translationally, phosphorylated by STK33 during sperm flagella assembly. In terms of tissue distribution, expressed in flagella of epididymal sperm.

The protein localises to the cell projection. The protein resides in the cilium. It is found in the flagellum. Functionally, major structural component of sperm fibrous sheath. May play a role in sperm motility. The protein is A-kinase anchor protein 4 of Rattus norvegicus (Rat).